The sequence spans 66 residues: DNA-binding protein 7d (66 aa).

An N6-methyllysine; partial mark is found at lysine 5 and lysine 7.

The protein belongs to the 7 kDa DNA-binding/endoribonuclease P2 family. As to quaternary structure, monomer. Post-translationally, lys-5 was 70% monomethylated in form 7a, 25% in form 7b, and 20% in form 7d. Lys-7 was 50% monomethylated in form 7a, 40% in form 7b, and 50% in form 7d.

The protein resides in the cytoplasm. Can constrain negative DNA supercoils. May be involved in maintaining the integrity of the genome at high temperature. This Sulfolobus acidocaldarius (strain ATCC 33909 / DSM 639 / JCM 8929 / NBRC 15157 / NCIMB 11770) protein is DNA-binding protein 7d.